A 123-amino-acid chain; its full sequence is MARRSGNPDEDLLKAVRIIKLLYQSSPCPNPRGSRQARKNRRRRWRARQRQIDSLSERILSDCLGRPAEPVPLQLPPIERLRLDCSESCGTSGTQQPQGTETGVGGPQISVESSAVLGSGTKN.

Serine 5 carries the phosphoserine; by host CK2 modification. The segment at 18 to 26 (IIKLLYQSS) is homomultimerization. Residues 25-50 (SSPCPNPRGSRQARKNRRRRWRARQR) are disordered. A Nuclear localization signal and RNA-binding (RRE) motif is present at residues 34 to 50 (SRQARKNRRRRWRARQR). Residues 35–49 (RQARKNRRRRWRARQ) show a composition bias toward basic residues. The Nuclear export signal and binding to XPO1 signature appears at 73–84 (LQLPPIERLRLD). The interval 86-123 (SESCGTSGTQQPQGTETGVGGPQISVESSAVLGSGTKN) is disordered. Positions 88–101 (SCGTSGTQQPQGTE) are enriched in polar residues. Serine 92 is modified (phosphoserine; by host).

It belongs to the HIV-1 REV protein family. As to quaternary structure, homomultimer; when bound to the RRE. Multimeric assembly is essential for activity and may involve XPO1. Binds to human KPNB1, XPO1, TNPO1, RANBP5 and IPO7. Interacts with the viral Integrase. Interacts with human KHDRBS1. Interacts with human NAP1; this interaction decreases Rev multimerization and stimulates its activity. Interacts with human DEAD-box helicases DDX3 and DDX24; these interactions may serve for viral RNA export to the cytoplasm and packaging, respectively. Interacts with human PSIP1; this interaction may inhibit HIV-1 DNA integration by promoting dissociation of the Integrase-LEDGF/p75 complex. Asymmetrically arginine dimethylated at one site by host PRMT6. Methylation impairs the RNA-binding activity and export of viral RNA from the nucleus to the cytoplasm. Post-translationally, phosphorylated by protein kinase CK2. Presence of, and maybe binding to the N-terminus of the regulatory beta subunit of CK2 is necessary for CK2-mediated Rev's phosphorylation.

It localises to the host nucleus. The protein resides in the host nucleolus. It is found in the host cytoplasm. In terms of biological role, escorts unspliced or incompletely spliced viral pre-mRNAs (late transcripts) out of the nucleus of infected cells. These pre-mRNAs carry a recognition sequence called Rev responsive element (RRE) located in the env gene, that is not present in fully spliced viral mRNAs (early transcripts). This function is essential since most viral proteins are translated from unspliced or partially spliced pre-mRNAs which cannot exit the nucleus by the pathway used by fully processed cellular mRNAs. Rev itself is translated from a fully spliced mRNA that readily exits the nucleus. Rev's nuclear localization signal (NLS) binds directly to KPNB1/Importin beta-1 without previous binding to KPNA1/Importin alpha-1. KPNB1 binds to the GDP bound form of RAN (Ran-GDP) and targets Rev to the nucleus. In the nucleus, the conversion from Ran-GDP to Ran-GTP dissociates Rev from KPNB1 and allows Rev's binding to the RRE in viral pre-mRNAs. Rev multimerization on the RRE via cooperative assembly exposes its nuclear export signal (NES) to the surface. Rev can then form a complex with XPO1/CRM1 and Ran-GTP, leading to nuclear export of the complex. Conversion from Ran-GTP to Ran-GDP mediates dissociation of the Rev/RRE/XPO1/RAN complex, so that Rev can return to the nucleus for a subsequent round of export. Beside KPNB1, also seems to interact with TNPO1/Transportin-1, RANBP5/IPO5 and IPO7/RANBP7 for nuclear import. The nucleoporin-like HRB/RIP is an essential cofactor that probably indirectly interacts with Rev to release HIV RNAs from the perinuclear region to the cytoplasm. This chain is Protein Rev, found in Human immunodeficiency virus type 1 group M subtype A (isolate U455) (HIV-1).